The primary structure comprises 425 residues: MANKEMFEDTVEERVINEEYKIWKKNTPFLYDLVMTHALEWPSLTVQWLPDVTRPEGKDYALHWLVLGTHTSDEQNHLVVARVQIPNDDAQFDASHYDSEKGEFGGFGSVSGKIETEIKINHEGEVNRARYMPQNPCIIATKTPSADVLVFDYTKHPSKPDPSGDCSPDLRLRGHQKEGYGLSWNSNLSGHLLSASDDHTVCLWDISAGPKEGKVVDAKAIFTGHSAVVEDVAWHLLHESLFGSVADDQKLMIWDTRSNTTSKPSHSVDAHTAEVNCLSFNPYSEFILATGSADKTVALWDLRNLKLKLHSFESHKDEIFQVHWSPHNETILASSGTDRRLNVWDLSKIGEEQSAEDAEDGPPELLFIHGGHTAKISDFSWNPNEPWVICSVSEDNIMQIWQMAENIYNDEEPDIPASELEAQGS.

7 WD repeats span residues 47 to 122 (QWLP…KINH), 128 to 173 (RARY…LRLR), 181 to 217 (GLSW…KVVD), 228 to 269 (VVED…HSVD), 275 to 312 (VNCL…LHSF), 318 to 369 (EIFQ…LFIH), and 376 to 403 (ISDF…IWQM).

It belongs to the WD repeat RBAP46/RBAP48/MSI1 family. In terms of assembly, binds directly to helix 1 of the histone fold of histone H4, a region that is not accessible when H4 is in chromatin.

The protein resides in the nucleus. In terms of biological role, core histone-binding subunit that may target chromatin remodeling factors, histone acetyltransferases and histone deacetylases to their histone substrates in a manner that is regulated by nucleosomal DNA. Component of several complexes which regulate chromatin metabolism. In Xenopus tropicalis (Western clawed frog), this protein is Histone-binding protein RBBP7 (rbbp7).